The following is a 199-amino-acid chain: Potassium-transporting ATPase KdpC subunit (199 aa).

A helical membrane pass occupies residues 7–27; it reads PALVMTAALCLITGIIYPGLI.

This sequence belongs to the KdpC family. As to quaternary structure, the system is composed of three essential subunits: KdpA, KdpB and KdpC.

Its subcellular location is the cell inner membrane. Functionally, part of the high-affinity ATP-driven potassium transport (or Kdp) system, which catalyzes the hydrolysis of ATP coupled with the electrogenic transport of potassium into the cytoplasm. This subunit acts as a catalytic chaperone that increases the ATP-binding affinity of the ATP-hydrolyzing subunit KdpB by the formation of a transient KdpB/KdpC/ATP ternary complex. In Gemmatimonas aurantiaca (strain DSM 14586 / JCM 11422 / NBRC 100505 / T-27), this protein is Potassium-transporting ATPase KdpC subunit.